A 2562-amino-acid chain; its full sequence is Zinc finger homeobox protein 2 (2562 aa).

Residues 1 to 13 (MATLNSASPSGTV) are compositionally biased toward polar residues. 2 disordered regions span residues 1-88 (MATL…PPKD) and 337-410 (PSPP…DPPP). Over residues 56–73 (GGERLESGSDLDPPKEIG) the composition is skewed to basic and acidic residues. 2 consecutive C2H2-type zinc fingers follow at residues 446-469 (LKCP…REKH) and 501-525 (YRCD…SDKH). Disordered stretches follow at residues 530–559 (QGFQ…EPKT), 603–651 (PPGL…PDKP), and 669–705 (RKFP…PSPD). A compositionally biased stretch (pro residues) spans 609 to 622 (PGPPPPPGAAPTNP). Positions 690–704 (LLGSSSDGLPTSPSP) are enriched in polar residues. 3 consecutive C2H2-type zinc fingers follow at residues 752-776 (HRCK…TDKH), 815-839 (LRCN…GSAH), and 864-888 (YHCL…TPAH). Residues 923 to 966 (RLQTPGKASDTPLAQPPTSEKDAQNKTEQQASEVTEDRSGPPRD) form a disordered region. Residues 1003–1026 (YRCPLCQEQLVGRPALHFHLSHLH) form a C2H2-type 6 zinc finger. Disordered stretches follow at residues 1058-1126 (NPVE…PAPR) and 1140-1166 (MSEE…HPLT). Pro residues-rich tracts occupy residues 1091–1101 (SPDPPLEPPLA) and 1114–1124 (DQPPSPAPSPA). 2 C2H2-type zinc fingers span residues 1185-1211 (YKCT…SHLH) and 1242-1266 (FKCT…SVLH). Basic and acidic residues predominate over residues 1278 to 1305 (RAEGAERGQEEFKEGETEGEAGTEKKGP). Residues 1278–1313 (RAEGAERGQEEFKEGETEGEAGTEKKGPDPGGFMSG) are disordered. A C2H2-type 9 zinc finger spans residues 1474–1497 (LACGACGKLFSNMLILKTHEEHVH). The segment at 1520–1584 (LYPPPVEPPK…EGSRGSLPPA (65 aa)) is disordered. Pro residues predominate over residues 1521 to 1531 (YPPPVEPPKPP). The segment at residues 1589 to 1648 (RRFSRTKFTEFQTQALQSFFETSAYPKDGEVERLASLLGLASRVVVVWFQNARQKARKNA) is a DNA-binding region (homeobox 1). The segment at 1664–1687 (SGCRRCHATFACVFELVRHLKKCY) adopts a C2H2-type 10; degenerate zinc-finger fold. Positions 1689–1760 (DQPPEEEEEA…EGKAPPSPPV (72 aa)) are disordered. Positions 1690-1713 (QPPEEEEEAERGEEEEEVEEEEAE) are enriched in acidic residues. The span at 1743 to 1752 (TRPESKESEG) shows a compositional bias: basic and acidic residues. The C2H2-type 11 zinc finger occupies 1761 to 1783 (YACDQCAASFPSQDLLTTHHRLH). Disordered regions lie at residues 1814–1853 (SGTS…KDKR), 1907–1934 (RKGQ…PAPF), 1971–2057 (PLPF…DSMG), 2114–2136 (KKAK…TSAA), 2186–2210 (PAPE…PLGA), 2263–2313 (QTAG…PNSS), and 2391–2429 (LQQP…LTGS). The segment at residues 1851 to 1910 (DKRLRTTILPEQLEILYRWYMQDSNPTRKMLDCISEEVGLKKRVVQVWFQNTRARERKGQ) is a DNA-binding region (homeobox 2). Residues 1985-1996 (TPEPPPPLPPPA) are compositionally biased toward pro residues. Residues 2008–2037 (KASPESEACSPSAGDLSDSSASSLAEPESP) are compositionally biased toward low complexity. The span at 2038 to 2051 (GAGGTSGGPGGGTG) shows a compositional bias: gly residues. A DNA-binding region (homeobox 3) is located at residues 2058 to 2117 (QRRYRTQMSSLQLKIMKACYEAYRTPTMQECEVLGEEIGLPKRVIQVWFQNARAKEKKAK). A compositionally biased stretch (pro residues) spans 2188-2200 (PETPLAPKGPPAT). Over residues 2275 to 2286 (PVSNQTNSSTDP) the composition is skewed to polar residues. The segment covering 2295-2305 (SGDKVSGERKP) has biased composition (basic and acidic residues). Pro residues predominate over residues 2395-2411 (PQAPEPTATAPPKPPEL). The segment at 2441–2461 (YLCRQCKMAFDGEAPATAHQR) adopts a C2H2-type 12; degenerate zinc-finger fold. A C2H2-type 13 zinc finger spans residues 2485–2509 (YHCLACEVLLSGREALASHLRSSAH). 2 disordered regions span residues 2506 to 2525 (SSAH…ITVT) and 2540 to 2562 (EEAR…LLAL). A compositionally biased stretch (low complexity) spans 2553–2562 (TTTTSTLLAL).

As to expression, expressed in brain (at protein level). Expressed at the highest levels in the pyramidal cell layer of the hippocampus, the suprachiasmatic nucleus, laterodorsal thalamic nucleus, lateral geniculate nucleus, substantia nigra pars compacta, and magnocellular part of the red nucleus (at protein level). Highly expressed in dorsal root ganglia. Expressed at lower levels in kidney, stomach, liver, heart and testis.

Its subcellular location is the nucleus. Its function is as follows. Transcriptional regulator that is critical for the regulation of pain perception and processing of noxious stimuli. This is Zinc finger homeobox protein 2 from Mus musculus (Mouse).